A 219-amino-acid polypeptide reads, in one-letter code: Small ribosomal subunit protein uS3 (219 aa).

In terms of domain architecture, KH type-2 spans 38–106 (IRKFIEKRLV…RVHINIVEIK (69 aa)).

The protein belongs to the universal ribosomal protein uS3 family. Part of the 30S ribosomal subunit. Forms a tight complex with proteins S10 and S14.

Functionally, binds the lower part of the 30S subunit head. Binds mRNA in the 70S ribosome, positioning it for translation. The sequence is that of Small ribosomal subunit protein uS3 from Levilactobacillus brevis (strain ATCC 367 / BCRC 12310 / CIP 105137 / JCM 1170 / LMG 11437 / NCIMB 947 / NCTC 947) (Lactobacillus brevis).